Consider the following 305-residue polypeptide: Probable lipid kinase YegS-like (305 aa).

Residues methionine 1–isoleucine 129 enclose the DAGKc domain. ATP is bound by residues threonine 39, glycine 65–aspartate 71, and threonine 92. Mg(2+)-binding residues include leucine 210, aspartate 213, and leucine 215. Residue glutamate 268 is the Proton acceptor of the active site.

Belongs to the diacylglycerol/lipid kinase family. YegS lipid kinase subfamily. Mg(2+) serves as cofactor. It depends on Ca(2+) as a cofactor.

It localises to the cytoplasm. Probably phosphorylates lipids; the in vivo substrate is unknown. The sequence is that of Probable lipid kinase YegS-like from Pseudomonas fluorescens (strain Pf0-1).